A 151-amino-acid polypeptide reads, in one-letter code: MKVIFTQDVRGRGKRGQVKEVPDGYAQNYLIKRGLAKVATKGNMNTLKRVEANEKAAYEAEKAEAEKIKAELEKDDTIVNFKSKAGTDSRLFGSISSKKIVEGLEKQYGIKVDKRKLNLPEPIKTLGYTNVHAKLFKGVEATIRVHVTEQD.

This sequence belongs to the bacterial ribosomal protein bL9 family.

Binds to the 23S rRNA. This is Large ribosomal subunit protein bL9 from Lactobacillus helveticus (strain DPC 4571).